The following is a 276-amino-acid chain: Large ribosomal subunit protein uL2 (276 aa).

The segment at 223 to 276 is disordered; the sequence is GSAMNPVDHPHGGGEGKAPIGHPGPLTPWGKPTLGYKTRKKNKPSDKFIVKRRK. A compositionally biased stretch (basic and acidic residues) spans 265 to 276; that stretch reads KPSDKFIVKRRK.

This sequence belongs to the universal ribosomal protein uL2 family. In terms of assembly, part of the 50S ribosomal subunit. Forms a bridge to the 30S subunit in the 70S ribosome.

Its function is as follows. One of the primary rRNA binding proteins. Required for association of the 30S and 50S subunits to form the 70S ribosome, for tRNA binding and peptide bond formation. It has been suggested to have peptidyltransferase activity; this is somewhat controversial. Makes several contacts with the 16S rRNA in the 70S ribosome. This is Large ribosomal subunit protein uL2 from Caldicellulosiruptor saccharolyticus (strain ATCC 43494 / DSM 8903 / Tp8T 6331).